A 659-amino-acid chain; its full sequence is ATP-binding cassette sub-family D member 3 (659 aa).

Positions 1–61 (MAAFSKYLTA…GKKERAVVDK (61 aa)) are interaction with PEX19. Residue N12 is glycosylated (N-linked (GlcNAc...) asparagine). K61 is subject to N6-acetyllysine. The chain crosses the membrane as a helical span at residues 84–104 (GYLLLIAVMLVSRTYCDVWMI). In terms of domain architecture, ABC transmembrane type-1 spans 85 to 372 (YLLLIAVMLV…MLLRMSQALG (288 aa)). N-linked (GlcNAc...) asparagine glycosylation is present at N106. Residues 126 to 146 (LFNFIAAMPLISLVNNFLKYG) form a helical membrane-spanning segment. N206 carries an N-linked (GlcNAc...) asparagine glycan. A helical transmembrane segment spans residues 224–244 (AIGAQGPASMMAYLLVSGLFL). N6-acetyllysine is present on K260. Residues 313–333 (MGFIDSIIAKYVATVVGYLVV) form a helical membrane-spanning segment. Position 399 is an N6-acetyllysine (K399). At S424 the chain carries Phosphoserine. In terms of domain architecture, ABC transporter spans 434 to 659 (INTDNIIKFD…ITEDTVEFGS (226 aa)). An ATP-binding site is contributed by 473–480 (GPNGCGKS). K533 is modified (N6-acetyllysine). S659 is subject to Phosphoserine.

It belongs to the ABC transporter superfamily. ABCD family. Peroxisomal fatty acyl CoA transporter (TC 3.A.1.203) subfamily. As to quaternary structure, homodimers. Can form heterodimers with ABCD1 and ABCD2. Dimerization is necessary to form an active transporter. Interacts with PEX19; mediates the targeting of ABCD3 to peroxisomes. In terms of processing, ubiquitinated by PEX2 during pexophagy in response to starvation, leading to its degradation.

It localises to the peroxisome membrane. It catalyses the reaction a very long-chain fatty acyl-CoA + H2O = a very long-chain fatty acid + CoA + H(+). The enzyme catalyses a very long-chain fatty acid(in) + ATP + H2O = a very long-chain fatty acid(out) + ADP + phosphate + H(+). The catalysed reaction is a long-chain fatty acyl-CoA + H2O = a long-chain fatty acid + CoA + H(+). It carries out the reaction a long-chain fatty acid(in) + ATP + H2O = a long-chain fatty acid(out) + ADP + phosphate + H(+). It catalyses the reaction pristanoyl-CoA + H2O = 2,6,10,14-tetramethylpentadecanoate + CoA + H(+). The enzyme catalyses 2,6,10,14-tetramethylpentadecanoate(in) + ATP + H2O = 2,6,10,14-tetramethylpentadecanoate(out) + ADP + phosphate + H(+). The catalysed reaction is hexadecanedioyl-CoA + H2O = hexadecanedioate + CoA + H(+). It carries out the reaction hexadecanedioate(in) + ATP + H2O = hexadecanedioate(out) + ADP + phosphate + H(+). It catalyses the reaction (5Z,8Z,11Z,14Z,17Z)-eicosapentaenoyl-CoA + H2O = (5Z,8Z,11Z,14Z,17Z)-eicosapentaenoate + CoA + H(+). The enzyme catalyses (5Z,8Z,11Z,14Z,17Z)-eicosapentaenoate(in) + ATP + H2O = (5Z,8Z,11Z,14Z,17Z)-eicosapentaenoate(out) + ADP + phosphate + H(+). The catalysed reaction is (4Z,7Z,10Z,13Z,16Z,19Z)-docosahexaenoyl-CoA + H2O = (4Z,7Z,10Z,13Z,16Z,19Z)-docosahexaenoate + CoA + H(+). It carries out the reaction (4Z,7Z,10Z,13Z,16Z,19Z)-docosahexaenoate(in) + ATP + H2O = (4Z,7Z,10Z,13Z,16Z,19Z)-docosahexaenoate(out) + ADP + phosphate + H(+). Functionally, broad substrate specificity ATP-dependent transporter of the ATP-binding cassette (ABC) family that catalyzes the transport of long-chain fatty acids (LCFA)-CoA, dicarboxylic acids-CoA, long-branched-chain fatty acids-CoA and bile acids from the cytosol to the peroxisome lumen for beta-oxydation. Has fatty acyl-CoA thioesterase and ATPase activities. Probably hydrolyzes fatty acyl-CoAs into free fatty acids prior to their ATP-dependent transport into peroxisomes. Thus, play a role in regulation of LCFAs and energy metabolism namely, in the degradation and biosynthesis of fatty acids by beta-oxidation. This chain is ATP-binding cassette sub-family D member 3 (Abcd3), found in Mus musculus (Mouse).